The following is a 230-amino-acid chain: ATP phosphoribosyltransferase (230 aa).

The protein belongs to the ATP phosphoribosyltransferase family. Short subfamily. Heteromultimer composed of HisG and HisZ subunits.

It localises to the cytoplasm. It catalyses the reaction 1-(5-phospho-beta-D-ribosyl)-ATP + diphosphate = 5-phospho-alpha-D-ribose 1-diphosphate + ATP. Its pathway is amino-acid biosynthesis; L-histidine biosynthesis; L-histidine from 5-phospho-alpha-D-ribose 1-diphosphate: step 1/9. Catalyzes the condensation of ATP and 5-phosphoribose 1-diphosphate to form N'-(5'-phosphoribosyl)-ATP (PR-ATP). Has a crucial role in the pathway because the rate of histidine biosynthesis seems to be controlled primarily by regulation of HisG enzymatic activity. The polypeptide is ATP phosphoribosyltransferase (hisG) (Chelativorans sp. (strain BNC1)).